Here is a 274-residue protein sequence, read N- to C-terminus: Diaminopimelate epimerase (274 aa).

Positions 11, 44, and 64 each coordinate substrate. The active-site Proton donor is the Cys-73. Residues 74–75, Asn-157, Asn-190, and 208–209 each bind substrate; these read GN and ER. The Proton acceptor role is filled by Cys-217. Substrate is bound at residue 218 to 219; the sequence is GS.

The protein belongs to the diaminopimelate epimerase family. In terms of assembly, homodimer.

Its subcellular location is the cytoplasm. The catalysed reaction is (2S,6S)-2,6-diaminopimelate = meso-2,6-diaminopimelate. The protein operates within amino-acid biosynthesis; L-lysine biosynthesis via DAP pathway; DL-2,6-diaminopimelate from LL-2,6-diaminopimelate: step 1/1. In terms of biological role, catalyzes the stereoinversion of LL-2,6-diaminopimelate (L,L-DAP) to meso-diaminopimelate (meso-DAP), a precursor of L-lysine and an essential component of the bacterial peptidoglycan. The polypeptide is Diaminopimelate epimerase (Shigella flexneri serotype 5b (strain 8401)).